Here is a 686-residue protein sequence, read N- to C-terminus: APPKTTVRWCTISSAEEKKCNSLKDHMQQERVTLSCVQKATYLDCIKAISNNEADAISLDGGQVFEAGLAPYKLKPIAAEVYERSGGSTTSYYAVAVVKKGTDFMIKDLRGKTSCHTGLGRSAGWNIPIGTLIHREDIEWEGIESGISEQAVAKFFSASCVPGATIEQKLCRQCKGDAKTKCLRNGPYSGYSGAFQCLKDGKGDVAFVKHTTVQENAPEEKDEYELLCLDGSRQPVDSYKTCNWARVAAHAVVARDDSKIDDIWSFLGMQAYSLGVDTTSDFHLFGPPGKKDPVLKDLLFKDSAIMLKRVPELMDSQLYLGFEYYSAIQSLRKDQLTVGPRENKIQWCAVGKDEKSKCDRWSVVSNGEVECTILDDNKDCIVKITKGEADAISLDGGFVYTAGVCGLVPVVGESYEDETQCSKDEEQPAYYFAVAVVKKSSAITWNNLQGKKSCHTAVGRTAGWNIPMGLIHNKTGSCDFDDYFSEGCAPGSPPNSRLCKLCQGSGENLLEKCVASSHEKYYGYTGALRCLVEQGDVAFIKHSTVGENVSGSNKDDWAKGLTRDDFELLCTNGKRAKTMDYKTCHLAKVPTHAVVARPEKANKIRELLEGQEKLFGLHGTEKERFMMFQSQTKDLLFKALTKCLVKLRQGITYKEFLGDEYYASVASLNTCNPSDLLQVCTFLEDK.

Transferrin-like domains are found at residues 7 to 333 (VRWC…SLRK) and 345 to 670 (IQWC…SLNT). 6 disulfide bridges follow: C10/C45, C20/C36, C115/C197, C160/C174, C171/C182, and C228/C242. Positions 333-341 (KDQLTVGPR) are connecting region. Disulfide bonds link C348–C380, C358–C371, C405–C680, C421–C643, C454–C530, C478–C671, C488–C502, C499–C513, and C570–C584. N-linked (GlcNAc...) asparagine glycosylation is present at N473. N-linked (GlcNAc...) asparagine glycosylation is present at N548.

It belongs to the transferrin family. Monomer.

It is found in the secreted. In terms of biological role, transferrins are iron binding transport proteins which can bind two Fe(3+) ions in association with the binding of an anion, usually bicarbonate. It is responsible for the transport of iron from sites of absorption and heme degradation to those of storage and utilization. Serum transferrin may also have a further role in stimulating cell proliferation. Functionally, ovotransferrin has a bacteriostatic function. Its concentration in avian egg is the highest concentration of any transferrin in vivo. In Anas platyrhynchos (Mallard), this protein is Ovotransferrin.